Consider the following 555-residue polypeptide: DNA-directed primase/polymerase protein (555 aa).

A coiled-coil region spans residues 1–22 (MKRKWEATLKQIEERASHYERK). Residues Arg76, 114–116 (DLE), and 165–169 (KFSRH) each bind substrate. Mn(2+)-binding residues include Asp114 and Glu116. Residues 210–230 (ETTGHEFTHFSETPSEQGTCF) form a disordered region. Positions 219–230 (FSETPSEQGTCF) are enriched in polar residues. Ser255 carries the phosphoserine modification. Residues 288–291 (RNFR) and Lys297 each bind substrate. Cys418, His425, Cys445, and Cys450 together coordinate Zn(2+). The short motif at 418 to 451 (CENIGRAHRSNNIMILVDLKNEVWYQKCHDPVCK) is the Zinc knuckle motif element. Positions 480 to 503 (TDTTADTETKSPHGPSSSVLSKGA) are disordered. The tract at residues 480 to 555 (TDTTADTETK…DELLIEVLQE (76 aa)) is interaction with RPA1. Short sequence motifs (RPA1-binding motif) lie at residues 509-523 (WDNG…EATE) and 543-551 (EIPDELLIE).

Belongs to the eukaryotic-type primase small subunit family. As to quaternary structure, interacts with RPA1; leading to recruitment to chromatin and stimulate DNA primase activity. Interacts with SSBP1. Interacts with POLDIP2; leading to enhance DNA polymerase activity. Mn(2+) serves as cofactor.

The protein localises to the nucleus. Its subcellular location is the mitochondrion matrix. The protein resides in the chromosome. It carries out the reaction ssDNA + n NTP = ssDNA/pppN(pN)n-1 hybrid + (n-1) diphosphate.. It catalyses the reaction DNA(n) + a 2'-deoxyribonucleoside 5'-triphosphate = DNA(n+1) + diphosphate. Its function is as follows. DNA primase and DNA polymerase required to tolerate replication-stalling lesions by bypassing them. Required to facilitate mitochondrial and nuclear replication fork progression by initiating de novo DNA synthesis using dNTPs and acting as an error-prone DNA polymerase able to bypass certain DNA lesions. Shows a high capacity to tolerate DNA damage lesions such as 8oxoG and abasic sites in DNA. Provides different translesion synthesis alternatives when DNA replication is stalled: able to synthesize DNA primers downstream of lesions, such as ultraviolet (UV) lesions, R-loops and G-quadruplexes, to allow DNA replication to continue. Can also realign primers ahead of 'unreadable lesions' such as abasic sites and 6-4 photoproduct (6-4 pyrimidine-pyrimidinone), thereby skipping the lesion. Repriming avoids fork degradation while leading to accumulation of internal ssDNA gaps behind the forks. Also able to incorporate nucleotides opposite DNA lesions such as 8oxoG, like a regular translesion synthesis DNA polymerase. Also required for reinitiating stalled forks after UV damage during nuclear DNA replication. Required for mitochondrial DNA (mtDNA) synthesis and replication, by reinitiating synthesis after UV damage or in the presence of chain-terminating nucleotides. Prevents APOBEC family-mediated DNA mutagenesis by repriming downstream of abasic site to prohibit error-prone translesion synthesis. Has non-overlapping function with POLH. In addition to its role in DNA damage response, also required to maintain efficient nuclear and mitochondrial DNA replication in unperturbed cells. The sequence is that of DNA-directed primase/polymerase protein from Bos taurus (Bovine).